Here is a 207-residue protein sequence, read N- to C-terminus: Transcriptional regulator GfcR (207 aa).

The protein belongs to the purine/pyrimidine phosphoribosyltransferase family. GfcR subfamily.

The protein is Transcriptional regulator GfcR of Methanocella arvoryzae (strain DSM 22066 / NBRC 105507 / MRE50).